The sequence spans 324 residues: tRNA(Ile)-lysidine synthase (324 aa).

33 to 38 contributes to the ATP binding site; sequence SGGPDS.

This sequence belongs to the tRNA(Ile)-lysidine synthase family.

Its subcellular location is the cytoplasm. The catalysed reaction is cytidine(34) in tRNA(Ile2) + L-lysine + ATP = lysidine(34) in tRNA(Ile2) + AMP + diphosphate + H(+). Functionally, ligates lysine onto the cytidine present at position 34 of the AUA codon-specific tRNA(Ile) that contains the anticodon CAU, in an ATP-dependent manner. Cytidine is converted to lysidine, thus changing the amino acid specificity of the tRNA from methionine to isoleucine. The polypeptide is tRNA(Ile)-lysidine synthase (Thermobifida fusca (strain YX)).